The primary structure comprises 264 residues: NFAT activation molecule 1 (264 aa).

An N-terminal signal peptide occupies residues 1 to 37 (MESWLLRRGARVRCLHPPSWLPAWCFLCLLPVPQTLQ). At 38–159 (LTGLVSLTHT…QPPAFKVQEA (122 aa)) the chain is on the extracellular side. The 97-residue stretch at 49-145 (LPIMVSLANT…QSDGVVILVR (97 aa)) folds into the Ig-like V-type domain. C64 and C110 are joined by a disulfide. N105 and N118 each carry an N-linked (GlcNAc...) asparagine glycan. A helical transmembrane segment spans residues 160-180 (LMLGFTSLMSVLGVLGTALLL). Over 181-264 (WKKKQISVLG…NEFNLVYENL (84 aa)) the chain is Cytoplasmic. The region spanning 212-232 (ESVYTSLQRRETEVYACMKEE) is the ITAM domain. Residues Y215 and Y226 each carry the phosphotyrosine modification.

No direct interaction with the B-cell antigen receptor (BCR). Interacts with SYK; probably involved in BCR signaling. Interacts with ZAP70. In terms of processing, N-glycosylated. Highly expressed in the spleen, expressed by both B- and CD4+ and CD8+ T-cells, as well as non-T- and non-B-cells, including macrophages and neutrophils. Expressed at low levels, if any, in non-immune tissue.

It is found in the cell membrane. May function in immune system as a receptor which activates via the calcineurin/NFAT-signaling pathway the downstream cytokine gene promoters. Activates the transcription of IL-13 and TNF-alpha promoters. May be involved in the regulation of B-cell, but not T-cell, development. This Mus musculus (Mouse) protein is NFAT activation molecule 1 (Nfam1).